The following is a 363-amino-acid chain: Molybdenum import ATP-binding protein ModC (363 aa).

The ABC transporter domain maps to 1–230; the sequence is MISARFSGRQ…PNLPLIHRPD (230 aa). 31–38 is a binding site for ATP; it reads GPSGCGKT. Positions 289–359 constitute a Mop domain; sequence DTTILNALPA…LKAMALSAPA (71 aa).

This sequence belongs to the ABC transporter superfamily. Molybdate importer (TC 3.A.1.8) family. The complex is composed of two ATP-binding proteins (ModC), two transmembrane proteins (ModB) and a solute-binding protein (ModA).

It is found in the cell inner membrane. It catalyses the reaction molybdate(out) + ATP + H2O = molybdate(in) + ADP + phosphate + H(+). Part of the ABC transporter complex ModABC involved in molybdenum import. Responsible for energy coupling to the transport system. This is Molybdenum import ATP-binding protein ModC from Rhodobacter capsulatus (Rhodopseudomonas capsulata).